Consider the following 506-residue polypeptide: ATP synthase subunit alpha (506 aa).

Residue 171–178 (GDRQTGKT) participates in ATP binding.

The protein belongs to the ATPase alpha/beta chains family. As to quaternary structure, F-type ATPases have 2 components, CF(1) - the catalytic core - and CF(0) - the membrane proton channel. CF(1) has five subunits: alpha(3), beta(3), gamma(1), delta(1), epsilon(1). CF(0) has four main subunits: a, b, b' and c.

It localises to the cellular thylakoid membrane. It carries out the reaction ATP + H2O + 4 H(+)(in) = ADP + phosphate + 5 H(+)(out). Produces ATP from ADP in the presence of a proton gradient across the membrane. The alpha chain is a regulatory subunit. The chain is ATP synthase subunit alpha from Nostoc punctiforme (strain ATCC 29133 / PCC 73102).